We begin with the raw amino-acid sequence, 359 residues long: Peptide chain release factor 1 (359 aa).

Gln235 is subject to N5-methylglutamine.

The protein belongs to the prokaryotic/mitochondrial release factor family. In terms of processing, methylated by PrmC. Methylation increases the termination efficiency of RF1.

It localises to the cytoplasm. Its function is as follows. Peptide chain release factor 1 directs the termination of translation in response to the peptide chain termination codons UAG and UAA. This is Peptide chain release factor 1 from Polynucleobacter asymbioticus (strain DSM 18221 / CIP 109841 / QLW-P1DMWA-1) (Polynucleobacter necessarius subsp. asymbioticus).